The chain runs to 293 residues: Acetyl-coenzyme A carboxylase carboxyl transferase subunit beta (293 aa).

A CoA carboxyltransferase N-terminal domain is found at 29-293 (LWVKCSECSQ…GVKELAEANT (265 aa)). Zn(2+) is bound by residues cysteine 33, cysteine 36, cysteine 52, and cysteine 55. A C4-type zinc finger spans residues 33 to 55 (CSECSQVAYRKDLISNFNVCSNC).

This sequence belongs to the AccD/PCCB family. In terms of assembly, acetyl-CoA carboxylase is a heterohexamer composed of biotin carboxyl carrier protein (AccB), biotin carboxylase (AccC) and two subunits each of ACCase subunit alpha (AccA) and ACCase subunit beta (AccD). Zn(2+) is required as a cofactor.

It localises to the cytoplasm. The catalysed reaction is N(6)-carboxybiotinyl-L-lysyl-[protein] + acetyl-CoA = N(6)-biotinyl-L-lysyl-[protein] + malonyl-CoA. Its pathway is lipid metabolism; malonyl-CoA biosynthesis; malonyl-CoA from acetyl-CoA: step 1/1. In terms of biological role, component of the acetyl coenzyme A carboxylase (ACC) complex. Biotin carboxylase (BC) catalyzes the carboxylation of biotin on its carrier protein (BCCP) and then the CO(2) group is transferred by the transcarboxylase to acetyl-CoA to form malonyl-CoA. This Prochlorococcus marinus (strain MIT 9301) protein is Acetyl-coenzyme A carboxylase carboxyl transferase subunit beta.